Here is a 453-residue protein sequence, read N- to C-terminus: HTH-type pyridoxine biosynthesis transcriptional regulator PdxR (453 aa).

The 69-residue stretch at 15-83 (TSIPTQLTEQ…RGSGTTINPD (69 aa)) folds into the HTH gntR-type domain. The segment at residues 43 to 62 (SRSLSTQLGVSRGSVVTAYD) is a DNA-binding region (H-T-H motif).

The protein in the C-terminal section; belongs to the class-I pyridoxal-phosphate-dependent aminotransferase family. Pyridoxal 5'-phosphate serves as cofactor.

In terms of biological role, may have a regulatory function in pyridoxine biosynthesis. Is said to also have an aminotransferase activity in valine biosynthesis as a double inactivation of ilvE and pdxR results in an auxotrophic requirement for valine. This is HTH-type pyridoxine biosynthesis transcriptional regulator PdxR (pdxR) from Corynebacterium glutamicum (strain ATCC 13032 / DSM 20300 / JCM 1318 / BCRC 11384 / CCUG 27702 / LMG 3730 / NBRC 12168 / NCIMB 10025 / NRRL B-2784 / 534).